The following is a 665-amino-acid chain: Coiled-coil domain-containing protein 138 (665 aa).

Phosphothreonine is present on Thr-48. Phosphoserine is present on Ser-49. Residues 198–323 (QQKFAEELQK…YEFMTIQRLK (126 aa)) are a coiled coil. Phosphoserine is present on Ser-469.

This is Coiled-coil domain-containing protein 138 (CCDC138) from Macaca fascicularis (Crab-eating macaque).